A 427-amino-acid chain; its full sequence is Gamma-glutamyl phosphate reductase (427 aa).

This sequence belongs to the gamma-glutamyl phosphate reductase family.

The protein resides in the cytoplasm. The enzyme catalyses L-glutamate 5-semialdehyde + phosphate + NADP(+) = L-glutamyl 5-phosphate + NADPH + H(+). The protein operates within amino-acid biosynthesis; L-proline biosynthesis; L-glutamate 5-semialdehyde from L-glutamate: step 2/2. In terms of biological role, catalyzes the NADPH-dependent reduction of L-glutamate 5-phosphate into L-glutamate 5-semialdehyde and phosphate. The product spontaneously undergoes cyclization to form 1-pyrroline-5-carboxylate. In Sinorhizobium medicae (strain WSM419) (Ensifer medicae), this protein is Gamma-glutamyl phosphate reductase.